The sequence spans 97 residues: Co-chaperonin GroES (97 aa).

It belongs to the GroES chaperonin family. As to quaternary structure, heptamer of 7 subunits arranged in a ring. Interacts with the chaperonin GroEL.

Its subcellular location is the cytoplasm. In terms of biological role, together with the chaperonin GroEL, plays an essential role in assisting protein folding. The GroEL-GroES system forms a nano-cage that allows encapsulation of the non-native substrate proteins and provides a physical environment optimized to promote and accelerate protein folding. GroES binds to the apical surface of the GroEL ring, thereby capping the opening of the GroEL channel. This is Co-chaperonin GroES from Azotobacter vinelandii (strain DJ / ATCC BAA-1303).